Reading from the N-terminus, the 1059-residue chain is Pleckstrin homology domain-containing family M member 1 (1059 aa).

An RUN domain is found at 40 to 182 (TSEDGDANTM…LSFELSYKSA (143 aa)). S218 carries the post-translational modification Phosphoserine. Disordered regions lie at residues 218–244 (SLDSISHSSGSEDIEVQHSGHKIRRDR), 272–334 (LQEN…TPMF), and 354–411 (SEEP…DQGS). Composition is skewed to polar residues over residues 313-334 (SKAQVNSAPSSGPSQESDTPMF) and 392-401 (GSTSDQQPSS). S430, S433, and S488 each carry phosphoserine. Residues 536-627 (GLMKLGTVAR…WLDRVREALQ (92 aa)) enclose the PH 1 domain. Positions 634–640 (EEEWVNI) match the LIR motif. An interaction with RAB7A region spans residues 657–1059 (LPPYSALLPE…RKYQEQNTVS (403 aa)). Positions 686–780 (DAIKESLLYL…WRDLVRKVLA (95 aa)) constitute a PH 2 domain. The Phorbol-ester/DAG-type zinc-finger motif lies at 989–1043 (QHVYHCDLCTQRGFICQICHHQDIIFPFEFDTTVRCAECRTVFHQSCQAVVRKGC).

In terms of assembly, interacts (via N- and C-terminus) with RAB7A (GTP-bound form). Simultaneously interacts with RAB7A and ARL8B; bringing about clustering and fusion of late endosomes and lysosomes. Interacts (via RUN domain) with ARL8B (GTP-bound form); the interaction is required for PLEKHM1 localization to lysosomes and for ARL8B function in delivery and degradation of endocytic and autophagic cargo in lysosomes. PLEKHM1 and PLEKHM2 compete for interaction with ARL8B. Interacts with ARL8A; the interaction is weaker than with ARL8B. Interacts with VPS41, VPS11, VPS18, VPS33A and VPS39; indicative for an association with the HOPS complex; the interactions with, at least, VPS41, VPS11, VPS18 and VPS33A require ARL8B. Interacts with GABARAP, GABARAPL, GABARAPL2, MAP1LC3A, MAP1LC3B and MAP1LC3C. Interacts with PAFAH1B. Interacts (via N- and C-terminus) with NDEL1. Interacts (via C-terminus) with MAP3K7. Interacts (via N- and C-terminus) with FAM98A. Interacts (via C-terminus) with DEF8; this interaction is weak but increased in a RAB7A-dependent manner. May interact with sialyl-lex-positive protein. In terms of tissue distribution, expressed in testis, skeletal muscle, lung, liver, spleen, brain, heart, kidney and bone. Weakly expressed in monocytes (at protein level).

The protein localises to the autolysosome membrane. The protein resides in the endosome membrane. It localises to the late endosome membrane. It is found in the lysosome membrane. Functionally, acts as a multivalent adapter protein that regulates Rab7-dependent and HOPS complex-dependent fusion events in the endolysosomal system and couples autophagic and the endocytic trafficking pathways. Acts as a dual effector of RAB7A and ARL8B that simultaneously binds these GTPases, bringing about clustering and fusion of late endosomes and lysosomes. Required for late stages of endolysosomal maturation, facilitating both endocytosis-mediated degradation of growth factor receptors and autophagosome clearance. Interaction with Arl8b is a crucial factor in the terminal maturation of autophagosomes and to mediate autophagosome-lysosome fusion. Positively regulates lysosome peripheral distribution and ruffled border formation in osteoclasts. May be involved in negative regulation of endocytic transport from early endosome to late endosome/lysosome implicating its association with Rab7. May have a role in sialyl-lex-mediated transduction of apoptotic signals. Involved in bone resorption. The sequence is that of Pleckstrin homology domain-containing family M member 1 from Rattus norvegicus (Rat).